Reading from the N-terminus, the 2173-residue chain is Mediator of DNA damage checkpoint protein 1 (2173 aa).

Acidic residues predominate over residues 1 to 19 (MEDTQAIDWDVEEEEETEQ). The disordered stretch occupies residues 1–22 (MEDTQAIDWDVEEEEETEQSSE). The interval 1–150 (MEDTQAIDWD…SRGPLTVEET (150 aa)) is interaction with CHEK2. The interval 2 to 222 (EDTQAIDWDV…PFAFNLNSDT (221 aa)) is interaction with the MRN complex. Phosphothreonine is present on Thr-4. In terms of domain architecture, FHA spans 54 to 105 (NVVGRMPDCSVALPFPSISKQHAEIEILAWDKAPILRDCGSLNGTQILRPPK). A Phosphoserine modification is found at Ser-108. The required for nuclear localization (NLS1) stretch occupies residues 145 to 570 (LTVEETPRVQ…PAKLLVVSLE (426 aa)). Thr-146 is subject to Phosphothreonine. Ser-168, Ser-176, Ser-198, and Ser-220 each carry phosphoserine. The interval 198 to 320 (SDEEGHSPVL…PPGRPAEVHL (123 aa)) is disordered. At Thr-222 the chain carries Phosphothreonine. A compositionally biased stretch (low complexity) spans 227-244 (GQQSATEEASSAARRGAT). The segment covering 259-276 (QLEKDQPSVKERDNDTKV) has biased composition (basic and acidic residues). Residue Ser-301 is modified to Phosphoserine. Position 303 is a phosphothreonine (Thr-303). A compositionally biased stretch (basic and acidic residues) spans 308-320 (DSRPPGRPAEVHL). At Ser-331 the chain carries Phosphoserine. Thr-333 bears the Phosphothreonine mark. The disordered stretch occupies residues 359 to 383 (GTRGPGAPGLSHLQESQAGSDTDVE). Ser-374 and Ser-378 each carry phosphoserine. Residue Thr-380 is modified to Phosphothreonine. A phosphoserine mark is found at Ser-396, Ser-399, and Ser-404. Thr-406 is subject to Phosphothreonine. Ser-413 bears the Phosphoserine mark. The tract at residues 444-515 (LQRSQTTTGR…SSPGIHLERS (72 aa)) is disordered. Thr-451 carries the post-translational modification Phosphothreonine. Phosphoserine is present on Ser-455. At Thr-457 the chain carries Phosphothreonine. A phosphoserine mark is found at Ser-487, Ser-497, Ser-500, Ser-506, Ser-507, and Ser-515. A Phosphothreonine modification is found at Thr-525. Ser-592 is subject to Phosphoserine. Lys-618 participates in a covalent cross-link: Glycyl lysine isopeptide (Lys-Gly) (interchain with G-Cter in SUMO1); alternate. Residue Lys-618 forms a Glycyl lysine isopeptide (Lys-Gly) (interchain with G-Cter in SUMO2); alternate linkage. Ser-631 carries the phosphoserine modification. Disordered stretches follow at residues 652-697 (VDTD…EDPD) and 773-1770 (HLEA…TLRS). The segment covering 673 to 687 (GREREQHVGRTKDSE) has biased composition (basic and acidic residues). Residues 688 to 697 (DNCDDSEDPD) show a composition bias toward acidic residues. Residues Ser-782 and Ser-795 each carry the phosphoserine modification. An N6-acetyllysine modification is found at Lys-814. Basic and acidic residues-rich tracts occupy residues 821–846 (ETAERVGPERGPLERETEKLLPERQT), 853–864 (ELTRGIQDREQK), 870–903 (DTQRQESDKNGESASPERDRESLKVEIETSKEIQ), and 916–953 (AFEREVERPVADRECEPAELEEKVPKVILERDAQRGEP). Residues Ser-957, Ser-1000, Ser-1035, Ser-1070, and Ser-1088 each carry the phosphoserine modification. Residues 957 to 969 (SQDQKGQASSPTS) show a composition bias toward polar residues. A compositionally biased stretch (basic and acidic residues) spans 1079-1090 (TIRKTGQDRSQE). The segment covering 1105 to 1115 (PKPKIITRKSS) has biased composition (basic residues). Over residues 1131–1156 (PSTSTAQPVTPKPTSQATRSRTNRSS) the composition is skewed to polar residues. The segment at 1150–1694 (SRTNRSSVKT…KNRSSVKTPE (545 aa)) is interaction with the PRKDC complex. A compositionally biased stretch (low complexity) spans 1157–1169 (VKTPEPVVPTVPE). At Thr-1159 the chain carries Phosphothreonine. The span at 1171–1189 (QPSTSTDQPVASEPTSQAT) shows a compositional bias: polar residues. A Phosphothreonine modification is found at Thr-1200. Phosphoserine is present on Ser-1237. Phosphothreonine is present on residues Thr-1241, Thr-1282, and Thr-1304. The span at 1280–1292 (VKTPEPVVPTVPE) shows a compositional bias: low complexity. The segment covering 1294–1320 (QPSTSTDQPVTSEPTSQATRGRTNRSS) has biased composition (polar residues). Residues 1321–1333 (VKTPEPVVPTVPE) show a composition bias toward low complexity. Residues 1335–1353 (QPSTSTDQPVASEPTSQAT) are compositionally biased toward polar residues. The span at 1390–1402 (TSRTTRSRTNMSS) shows a compositional bias: low complexity. Composition is skewed to polar residues over residues 1418-1434 (PSTSTEQPVITEPTYQP), 1456-1487 (KLQSSTSTDQPITPEPTSQATRGRTNRSSVKS), 1499-1527 (QPSTSTHQPVTAKHTSQATRGRTNRSSVK), and 1540-1559 (QPSTSTHQPITPEPTSQATR). Residues Ser-1483 and Ser-1484 each carry the phosphoserine modification. The residue at position 1486 (Lys-1486) is an N6-acetyllysine. Residues Thr-1509 and Thr-1550 each carry the phosphothreonine modification. Residues 1567–1578 (VKTPKIVVPTVP) show a composition bias toward low complexity. The span at 1581–1598 (QASTSTDQPVTSEPTSRT) shows a compositional bias: polar residues. Residues Thr-1617 and Thr-1632 each carry the phosphothreonine modification. Over residues 1626–1639 (STDQPITPKPTSRA) the composition is skewed to polar residues. Phosphoserine is present on Ser-1648. Phosphothreonine is present on residues Thr-1651 and Thr-1673. Residues 1664–1680 (PSTSRSQLVTPEPTSRA) are compositionally biased toward polar residues. Ser-1688 carries the post-translational modification Phosphoserine. A phosphothreonine mark is found at Thr-1692, Thr-1714, Thr-1748, and Thr-1755. Polar residues predominate over residues 1705–1721 (PTTSTDQPVTPKPTSRA). A compositionally biased stretch (polar residues) spans 1761–1770 (QGSQSKTLRS). The residue at position 1765 (Ser-1765) is a Phosphoserine. The residue at position 1781 (Thr-1781) is a Phosphothreonine. The segment at 1782 to 2173 (PEFQSPVTTD…VLSPLEMSST (392 aa)) is required for nuclear localization (NLS2). Ser-1786 and Ser-1795 each carry phosphoserine. A disordered region spans residues 1809–1971 (RATGNPGSLT…NRSLRRTKLN (163 aa)). A Glycyl lysine isopeptide (Lys-Gly) (interchain with G-Cter in SUMO2) cross-link involves residue Lys-1824. Ser-1859 is subject to Phosphoserine. Lys-1874 participates in a covalent cross-link: Glycyl lysine isopeptide (Lys-Gly) (interchain with G-Cter in SUMO2). Thr-1884 is modified (phosphothreonine). Ser-1904 carries the post-translational modification Phosphoserine. A compositionally biased stretch (polar residues) spans 1907–1920 (HQKQPQRGEVSQKT). Lys-1924 participates in a covalent cross-link: Glycyl lysine isopeptide (Lys-Gly) (interchain with G-Cter in SUMO1); alternate. Lys-1924 is covalently cross-linked (Glycyl lysine isopeptide (Lys-Gly) (interchain with G-Cter in SUMO2); alternate). Over residues 1931-1941 (AEKPGKEEDVM) the composition is skewed to basic and acidic residues. Thr-1942 carries the phosphothreonine modification. 2 BRCT domains span residues 1976–2054 (APKV…EYVV) and 2075–2166 (RERR…FVLS). Omega-N-methylarginine is present on Arg-2027.

Homodimer. Interacts with H2AX, which requires phosphorylation of H2AX on 'Ser-139'. Interacts with the MRN complex, composed of MRE11, RAD50, and NBN. Interacts with CHEK2, which requires ATM-mediated phosphorylation of 'Thr-68' within the FHA domain of CHEK2. Interacts constitutively with the BRCA1-BARD1 complex, SMC1A and TP53BP1. Interacts with ATM and FANCD2, and these interactions are reduced upon DNA damage. Also interacts with the PRKDC complex, composed of XRCC6/KU70, XRCC5/KU80 and PRKDC/XRCC7. This interaction may be required for PRKDC autophosphorylation, which is essential for DNA double strand break (DSB) repair. When phosphorylated by ATM, interacts with RNF8 (via FHA domain). Interacts with CEP164. When phosphorylated, interacts with APTX (via FHA-like domain). Interacts (when phosphorylated) with TOPBP1; promoting TOPBP1 localization to DNA damage sites during mitosis. Interacts (when phosphorylated) with NBN; promoting NBN and MRN complex localization to DNA damage sites. Post-translationally, phosphorylated upon exposure to ionizing radiation (IR), ultraviolet radiation (UV), and hydroxyurea (HU). Phosphorylation in response to IR requires ATM, NBN, and possibly CHEK2. Also phosphorylated during the G2/M phase of the cell cycle and during activation of the mitotic spindle checkpoint. Phosphorylation at Thr-4 by ATM stabilizes and enhances homodimerization via the FHA domain. Phosphorylated at Ser-168 and Ser-198 by CK2 in response to DNA damage during mitosis, promoting interaction with TOPBP1. Phosphorylated by CK2 in response to DNA damage, promoting interaction with NBN and recruitment of the MRN complex to DNA damage sites. Sumoylation at Lys-1924 by PIAS4 following DNA damage promotes ubiquitin-mediated degradation. In terms of processing, ubiquitinated by RNF4, leading to proteasomal degradation; undergoes 'Lys-48'-linked polyubiquitination.

It localises to the nucleus. Its subcellular location is the chromosome. Histone reader protein required for checkpoint-mediated cell cycle arrest in response to DNA damage within both the S phase and G2/M phases of the cell cycle. Specifically recognizes and binds histone H2AX phosphorylated at 'Ser-139', a marker of DNA damage, serving as a scaffold for the recruitment of DNA repair and signal transduction proteins to discrete foci of DNA damage sites. Also required for downstream events subsequent to the recruitment of these proteins. These include phosphorylation and activation of the ATM, CHEK1 and CHEK2 kinases, and stabilization of TP53/p53 and apoptosis. ATM and CHEK2 may also be activated independently by a parallel pathway mediated by TP53BP1. Required for chromosomal stability during mitosis by promoting recruitment of TOPBP1 to DNA double strand breaks (DSBs): TOPBP1 forms filamentous assemblies that bridge MDC1 and tether broken chromosomes during mitosis. Required for the repair of DSBs via homologous recombination by promoting recruitment of NBN component of the MRN complex to DSBs. In Macaca mulatta (Rhesus macaque), this protein is Mediator of DNA damage checkpoint protein 1 (MDC1).